The chain runs to 114 residues: Large ribosomal subunit protein uL22 (114 aa).

Belongs to the universal ribosomal protein uL22 family. Part of the 50S ribosomal subunit.

Its function is as follows. This protein binds specifically to 23S rRNA; its binding is stimulated by other ribosomal proteins, e.g. L4, L17, and L20. It is important during the early stages of 50S assembly. It makes multiple contacts with different domains of the 23S rRNA in the assembled 50S subunit and ribosome. In terms of biological role, the globular domain of the protein is located near the polypeptide exit tunnel on the outside of the subunit, while an extended beta-hairpin is found that lines the wall of the exit tunnel in the center of the 70S ribosome. This chain is Large ribosomal subunit protein uL22, found in Alcanivorax borkumensis (strain ATCC 700651 / DSM 11573 / NCIMB 13689 / SK2).